The chain runs to 83 residues: Exodeoxyribonuclease 7 small subunit (83 aa).

The protein belongs to the XseB family. Heterooligomer composed of large and small subunits.

The protein resides in the cytoplasm. The enzyme catalyses Exonucleolytic cleavage in either 5'- to 3'- or 3'- to 5'-direction to yield nucleoside 5'-phosphates.. In terms of biological role, bidirectionally degrades single-stranded DNA into large acid-insoluble oligonucleotides, which are then degraded further into small acid-soluble oligonucleotides. The polypeptide is Exodeoxyribonuclease 7 small subunit (Rhodopseudomonas palustris (strain ATCC BAA-98 / CGA009)).